Here is a 523-residue protein sequence, read N- to C-terminus: Tryptamine 5-hydroxylase (523 aa).

A helical transmembrane segment spans residues methionine 5–leucine 25. Cysteine 453 is a heme binding site.

It belongs to the cytochrome P450 family. It depends on heme as a cofactor.

The protein localises to the endoplasmic reticulum membrane. It carries out the reaction tryptamine + reduced [NADPH--hemoprotein reductase] + O2 = serotonin + oxidized [NADPH--hemoprotein reductase] + H2O + H(+). Functionally, involved in serotonin biosynthesis. Catalyzes the conversion of tryptamine to serotonin. Accumulation of serotonin may play a role in innate immunity. This Oryza sativa subsp. japonica (Rice) protein is Tryptamine 5-hydroxylase.